Here is a 202-residue protein sequence, read N- to C-terminus: Dual-action ribosomal maturation protein DarP (202 aa).

Low complexity predominate over residues 1–13; it reads MPPMTRNTRNNPN. Residues 1–39 form a disordered region; the sequence is MPPMTRNTRNNPNGRFPGAFAPEDEDDLPKSKSQRKRDM.

This sequence belongs to the DarP family.

Its subcellular location is the cytoplasm. Its function is as follows. Member of a network of 50S ribosomal subunit biogenesis factors which assembles along the 30S-50S interface, preventing incorrect 23S rRNA structures from forming. Promotes peptidyl transferase center (PTC) maturation. This chain is Dual-action ribosomal maturation protein DarP, found in Cupriavidus metallidurans (strain ATCC 43123 / DSM 2839 / NBRC 102507 / CH34) (Ralstonia metallidurans).